The following is a 209-amino-acid chain: MPSEPNQTRPTRVQPSTAAYPPPNLAEPLPCPRCNSTTTKFCYYNNYNLAQPRYYCKSCRRYWTQGGTLRDVPVGGGTRRSSSKRHRSFSTTATSSSSSSSVITTTTQEPATTEASQTKVTNLISGHGSFASLLGLGSGNGGLDYGFGYGYGLEEMSIGYLGDSSVGEIPVVDGCGGDTWQIGEIEGKSGGDSLIWPGLEISMQTNDVK.

Residues 1 to 17 (MPSEPNQTRPTRVQPST) are compositionally biased toward polar residues. Residues 1 to 29 (MPSEPNQTRPTRVQPSTAAYPPPNLAEPL) form a disordered region. Positions 20-29 (YPPPNLAEPL) are enriched in pro residues. Residues 29-83 (LPCPRCNSTTTKFCYYNNYNLAQPRYYCKSCRRYWTQGGTLRDVPVGGGTRRSSS) form a Dof-type zinc finger. Positions 31, 34, 56, and 59 each coordinate Zn(2+). The segment at 70-116 (RDVPVGGGTRRSSSKRHRSFSTTATSSSSSSSVITTTTQEPATTEAS) is disordered. Positions 89 to 116 (FSTTATSSSSSSSVITTTTQEPATTEAS) are enriched in low complexity.

Its subcellular location is the nucleus. Transcription factor that binds specifically to a 5'-AA[AG]G-3' consensus core sequence. The chain is Dof zinc finger protein DOF1.6 (DOF1.6) from Arabidopsis thaliana (Mouse-ear cress).